Consider the following 389-residue polypeptide: ATP phosphoribosyltransferase regulatory subunit (389 aa).

The protein belongs to the class-II aminoacyl-tRNA synthetase family. HisZ subfamily. As to quaternary structure, heteromultimer composed of HisG and HisZ subunits.

The protein resides in the cytoplasm. It participates in amino-acid biosynthesis; L-histidine biosynthesis; L-histidine from 5-phospho-alpha-D-ribose 1-diphosphate: step 1/9. Functionally, required for the first step of histidine biosynthesis. May allow the feedback regulation of ATP phosphoribosyltransferase activity by histidine. The chain is ATP phosphoribosyltransferase regulatory subunit from Hydrogenovibrio crunogenus (strain DSM 25203 / XCL-2) (Thiomicrospira crunogena).